The sequence spans 216 residues: Probable nicotinate-nucleotide adenylyltransferase (216 aa).

This sequence belongs to the NadD family.

It catalyses the reaction nicotinate beta-D-ribonucleotide + ATP + H(+) = deamido-NAD(+) + diphosphate. Its pathway is cofactor biosynthesis; NAD(+) biosynthesis; deamido-NAD(+) from nicotinate D-ribonucleotide: step 1/1. Catalyzes the reversible adenylation of nicotinate mononucleotide (NaMN) to nicotinic acid adenine dinucleotide (NaAD). The sequence is that of Probable nicotinate-nucleotide adenylyltransferase from Shewanella baltica (strain OS185).